Here is a 125-residue protein sequence, read N- to C-terminus: MDQFKVPPPTYAPVAGQTIYGAPSYNNYYMRTPQVSTAPMIYPTPMMAPPIMTPPIMTQPIMTPPMMYPPIIPSQPFMGPSMVSPIMSPPMIPSQPFMGPSMVSPGYGVTPNLNVPFSTNVKYYD.

This is an uncharacterized protein from Dictyostelium discoideum (Social amoeba).